The primary structure comprises 105 residues: Large ribosomal subunit protein uL24 (105 aa).

Belongs to the universal ribosomal protein uL24 family. Part of the 50S ribosomal subunit.

Functionally, one of two assembly initiator proteins, it binds directly to the 5'-end of the 23S rRNA, where it nucleates assembly of the 50S subunit. In terms of biological role, one of the proteins that surrounds the polypeptide exit tunnel on the outside of the subunit. The sequence is that of Large ribosomal subunit protein uL24 from Cellvibrio japonicus (strain Ueda107) (Pseudomonas fluorescens subsp. cellulosa).